The sequence spans 319 residues: 7,8-didemethyl-8-hydroxy-5-deazariboflavin synthase (319 aa).

The 232-residue stretch at 5–236 (VTYSPAYTIV…SNITLQIPPN (232 aa)) folds into the Radical SAM core domain. C19, C23, and C26 together coordinate [4Fe-4S] cluster.

The protein belongs to the radical SAM superfamily. CofG family. In terms of assembly, consists of two subunits, CofG and CofH. The cofactor is [4Fe-4S] cluster.

The enzyme catalyses 5-amino-5-(4-hydroxybenzyl)-6-(D-ribitylimino)-5,6-dihydrouracil + S-adenosyl-L-methionine = 7,8-didemethyl-8-hydroxy-5-deazariboflavin + 5'-deoxyadenosine + L-methionine + NH4(+) + H(+). It participates in cofactor biosynthesis; coenzyme F0 biosynthesis. Its function is as follows. Catalyzes the radical-mediated synthesis of 7,8-didemethyl-8-hydroxy-5-deazariboflavin from 5-amino-5-(4-hydroxybenzyl)-6-(D-ribitylimino)-5,6-dihydrouracil. The sequence is that of 7,8-didemethyl-8-hydroxy-5-deazariboflavin synthase from Trichodesmium erythraeum (strain IMS101).